The chain runs to 235 residues: Small ribosomal subunit protein eS4 (235 aa).

Residues 37 to 100 (LPLGIIIRDI…NETYRMFQDE (64 aa)) form the S4 RNA-binding domain.

It belongs to the eukaryotic ribosomal protein eS4 family.

The chain is Small ribosomal subunit protein eS4 from Methanosarcina barkeri (strain Fusaro / DSM 804).